The sequence spans 246 residues: 5'-nucleotidase SurE (246 aa).

4 residues coordinate a divalent metal cation: D8, D9, S39, and N91.

Belongs to the SurE nucleotidase family. A divalent metal cation serves as cofactor.

It localises to the cytoplasm. The catalysed reaction is a ribonucleoside 5'-phosphate + H2O = a ribonucleoside + phosphate. Its function is as follows. Nucleotidase that shows phosphatase activity on nucleoside 5'-monophosphates. The sequence is that of 5'-nucleotidase SurE from Dechloromonas aromatica (strain RCB).